Here is a 193-residue protein sequence, read N- to C-terminus: Mediator of RNA polymerase II transcription subunit 20 (193 aa).

The protein belongs to the Mediator complex subunit 20 family. Component of the Mediator complex.

The protein localises to the nucleus. Component of the Mediator complex, a coactivator involved in the regulated transcription of nearly all RNA polymerase II-dependent genes. Mediator functions as a bridge to convey information from gene-specific regulatory proteins to the basal RNA polymerase II transcription machinery. The Mediator complex, having a compact conformation in its free form, is recruited to promoters by direct interactions with regulatory proteins and serves for the assembly of a functional preinitiation complex with RNA polymerase II and the general transcription factors. The polypeptide is Mediator of RNA polymerase II transcription subunit 20 (med20) (Schizosaccharomyces pombe (strain 972 / ATCC 24843) (Fission yeast)).